Consider the following 148-residue polypeptide: Caltractin (148 aa).

EF-hand domains lie at 4-39 (EQKQ…LGFE), 40-75 (PKKE…KMGE), 77-112 (DSRE…LGEN), and 113-148 (MTDE…TSLF). The Ca(2+) site is built by aspartate 17, aspartate 19, serine 21, threonine 23, glutamate 28, aspartate 53, aspartate 55, serine 57, threonine 59, and glutamate 64. Ca(2+) contacts are provided by aspartate 126, aspartate 128, aspartate 130, glutamate 132, and glutamate 137.

Belongs to the centrin family. In terms of tissue distribution, ubiquitous.

This calcium-binding protein is found in the basal body complexes (the functional homolog of the centrosome in animal cell). In mitotic cells it is specifically associated with the poles of the mitotic spindles at the sites of the duplicated basal body complexes. This chain is Caltractin, found in Tetraselmis striata (Green microalga).